Reading from the N-terminus, the 238-residue chain is 15,16-dihydrobiliverdin:ferredoxin oxidoreductase (238 aa).

Belongs to the HY2 family.

It carries out the reaction 15,16-dihydrobiliverdin + oxidized 2[4Fe-4S]-[ferredoxin] = biliverdin IXalpha + reduced 2[4Fe-4S]-[ferredoxin] + 2 H(+). Its function is as follows. Catalyzes the two-electron reduction of biliverdin IX-alpha at the C15 methine bridge. This Prochlorococcus marinus (strain NATL1A) protein is 15,16-dihydrobiliverdin:ferredoxin oxidoreductase.